A 294-amino-acid polypeptide reads, in one-letter code: Decaprenyl-diphosphate synthase subunit 2 (294 aa).

Belongs to the FPP/GGPP synthase family. Heterotetramer of 2 dps1 and 2 dlp1 subunits.

Its subcellular location is the mitochondrion. The catalysed reaction is 7 isopentenyl diphosphate + (2E,6E)-farnesyl diphosphate = all-trans-decaprenyl diphosphate + 7 diphosphate. The protein operates within cofactor biosynthesis; ubiquinone biosynthesis. Functionally, supplies decaprenyl diphosphate, the precursor for the side chain of the isoprenoid quinones ubiquinone-10. The polypeptide is Decaprenyl-diphosphate synthase subunit 2 (dlp1) (Schizosaccharomyces pombe (strain 972 / ATCC 24843) (Fission yeast)).